A 72-amino-acid polypeptide reads, in one-letter code: Putative membrane protein insertion efficiency factor (72 aa).

The protein belongs to the UPF0161 family.

The protein localises to the cell inner membrane. Functionally, could be involved in insertion of integral membrane proteins into the membrane. In Trichodesmium erythraeum (strain IMS101), this protein is Putative membrane protein insertion efficiency factor.